Consider the following 417-residue polypeptide: Cysteate synthase (417 aa).

Lys104 carries the N6-(pyridoxal phosphate)lysine modification. The pyridoxal 5'-phosphate site is built by Asn131 and Thr371.

Belongs to the threonine synthase family. Cysteate synthase subfamily. Homotrimer. Requires pyridoxal 5'-phosphate as cofactor.

The enzyme catalyses O-phospho-L-serine + sulfite + H(+) = L-cysteate + phosphate. It participates in cofactor biosynthesis; coenzyme M biosynthesis. Specifically catalyzes the beta-elimination of phosphate from L-phosphoserine and the beta-addition of sulfite to the dehydroalanine intermediate to produce L-cysteate. The chain is Cysteate synthase from Methanococcoides burtonii (strain DSM 6242 / NBRC 107633 / OCM 468 / ACE-M).